A 22-amino-acid polypeptide reads, in one-letter code: Peptide PGLa-BM3 (22 aa).

Leu-22 bears the Leucine amide mark.

As to expression, expressed by the skin glands.

Its subcellular location is the secreted. Functionally, antimicrobial peptide. The protein is Peptide PGLa-BM3 of Xenopus boumbaensis (Mawa clawed frog).